Consider the following 201-residue polypeptide: Recombination protein RecR (201 aa).

The segment at 60–75 (CSRCGNVDTVDPCTVC) adopts a C4-type zinc-finger fold. Residues 83–178 (SIIIVVEDVS…KITRLAHGVP (96 aa)) enclose the Toprim domain.

Belongs to the RecR family.

May play a role in DNA repair. It seems to be involved in an RecBC-independent recombinational process of DNA repair. It may act with RecF and RecO. In Rhizobium leguminosarum bv. trifolii (strain WSM2304), this protein is Recombination protein RecR.